The following is an 859-amino-acid chain: Leucine--tRNA ligase (859 aa).

The short motif at 42-52 is the 'HIGH' region element; sequence PYPSGRLHMGH. The short motif at 618–622 is the 'KMSKS' region element; that stretch reads KMSKS. K621 contributes to the ATP binding site.

The protein belongs to the class-I aminoacyl-tRNA synthetase family.

The protein localises to the cytoplasm. It carries out the reaction tRNA(Leu) + L-leucine + ATP = L-leucyl-tRNA(Leu) + AMP + diphosphate. The protein is Leucine--tRNA ligase of Shewanella putrefaciens (strain CN-32 / ATCC BAA-453).